Reading from the N-terminus, the 395-residue chain is Cyclomarin C epoxidase CymV (395 aa).

Belongs to the cytochrome P450 family.

Its function is as follows. Cytochrome P450; part of the gene cluster that mediates the biosynthesis of cyclic heptapeptides, known as cyclomarins and also of cyclic dipeptides, called cyclomarazines, which have both antimicrobial and cytotoxic effects. First, CymD catalyzes the reverse N-prenylation of monomeric L-tryptophan with dimethylallyl diphosphate (DMAPP) to form N-(1,1-dimethylallyl)-tryptophan (r-N-DMAT). The N-(1,1-dimethylallyl)-tryptophan produced by CymD is then combined with a range of standard and nonproteinogenic amino acid substrates to synthesize the peptides, a process that is probably catalyzed by the non-canonical nonribosomal peptide synthetase (NRPS), CymA. Other proteins in the cluster catalyze further modifications of the peptides including CymV which catalyzes the oxidation of olefinic cyclomarins and cyclomarazines to their respective epoxide derivatives. The chain is Cyclomarin C epoxidase CymV from Salinispora arenicola (strain CNS-205).